The chain runs to 306 residues: Porphobilinogen deaminase (306 aa).

Cys239 is modified (S-(dipyrrolylmethanemethyl)cysteine).

Belongs to the HMBS family. In terms of assembly, monomer. It depends on dipyrromethane as a cofactor.

The enzyme catalyses 4 porphobilinogen + H2O = hydroxymethylbilane + 4 NH4(+). The protein operates within porphyrin-containing compound metabolism; protoporphyrin-IX biosynthesis; coproporphyrinogen-III from 5-aminolevulinate: step 2/4. In terms of biological role, tetrapolymerization of the monopyrrole PBG into the hydroxymethylbilane pre-uroporphyrinogen in several discrete steps. This chain is Porphobilinogen deaminase, found in Helicobacter pylori (strain Shi470).